The sequence spans 599 residues: Elongation factor 4 (599 aa).

The tr-type G domain maps to 2 to 185 (KYIRNFSIIA…RIIIDIPVPQ (184 aa)). GTP contacts are provided by residues 14-19 (NHGKST) and 132-135 (NKID).

This sequence belongs to the TRAFAC class translation factor GTPase superfamily. Classic translation factor GTPase family. LepA subfamily.

The protein resides in the cell inner membrane. It catalyses the reaction GTP + H2O = GDP + phosphate + H(+). Functionally, required for accurate and efficient protein synthesis under certain stress conditions. May act as a fidelity factor of the translation reaction, by catalyzing a one-codon backward translocation of tRNAs on improperly translocated ribosomes. Back-translocation proceeds from a post-translocation (POST) complex to a pre-translocation (PRE) complex, thus giving elongation factor G a second chance to translocate the tRNAs correctly. Binds to ribosomes in a GTP-dependent manner. This Blochmanniella floridana protein is Elongation factor 4.